A 118-amino-acid polypeptide reads, in one-letter code: uncharacterized protein (118 aa).

Transmembrane regions (helical) follow at residues 20 to 39 (VEGP…LLWI), 46 to 63 (LVVV…GEAV), and 67 to 85 (LSLV…AMSG). Positions 85–118 (GDKSKKKGKKQRSILKDADDWDDDSWDDEGDWDE) are disordered. A compositionally biased stretch (basic residues) spans 88–97 (SKKKGKKQRS). The segment covering 103-118 (DDWDDDSWDDEGDWDE) has biased composition (acidic residues).

It is found in the cell membrane. This is an uncharacterized protein from Archaeoglobus fulgidus (strain ATCC 49558 / DSM 4304 / JCM 9628 / NBRC 100126 / VC-16).